The sequence spans 151 residues: Small ribosomal subunit protein uS15y (151 aa).

The protein belongs to the universal ribosomal protein uS15 family.

This is Small ribosomal subunit protein uS15y from Oryza sativa subsp. japonica (Rice).